A 361-amino-acid chain; its full sequence is Probable sugar phosphate/phosphate translocator At1g12500 (361 aa).

Position 2 is an N-acetylvaline (V2). 9 helical membrane passes run 56–76 (TILT…VLLL), 90–110 (IFLT…VINI), 125–145 (FLKI…GNTS), 153–173 (FNQA…FLIT), 192–212 (IVLA…ICVA), 240–260 (LLLY…LYIE), 276–296 (LIIF…LTNF), 306–326 (TLQV…VLIF), and 329–349 (PVTV…VLYS). Residues 89 to 196 (PIFLTMTHML…PVVSGIVLAS (108 aa)) form the EamA domain.

This sequence belongs to the TPT transporter family. TPT (TC 2.A.7.9) subfamily.

The protein resides in the membrane. The polypeptide is Probable sugar phosphate/phosphate translocator At1g12500 (Arabidopsis thaliana (Mouse-ear cress)).